Here is a 355-residue protein sequence, read N- to C-terminus: Mitogen-activated protein kinase (355 aa).

The region spanning 23 to 311 is the Protein kinase domain; it reads YDIQDVVGEG…VEEALKHPYL (289 aa). Residues 29–37 and Lys-52 each bind ATP; that span reads VGEGAYGVV. The Proton acceptor role is filled by Asp-147. A Phosphothreonine modification is found at Thr-183. The TXY motif lies at 183–185; that stretch reads TEY. Tyr-185 is modified (phosphotyrosine).

It belongs to the protein kinase superfamily. CMGC Ser/Thr protein kinase family. MAP kinase subfamily. Dually phosphorylated on Thr-183 and Tyr-185, which activates the enzyme.

It localises to the nucleus. The catalysed reaction is L-seryl-[protein] + ATP = O-phospho-L-seryl-[protein] + ADP + H(+). It catalyses the reaction L-threonyl-[protein] + ATP = O-phospho-L-threonyl-[protein] + ADP + H(+). Activated by tyrosine and threonine phosphorylation. Responds to activation by environmental stress by phosphorylating downstream targets. This Fusarium vanettenii (Neocosmospora pisi) protein is Mitogen-activated protein kinase (MAPK).